The chain runs to 183 residues: MIVGLIGVVEKISALEAHIEVQGVVYGVQVSMRTAALLQTGQKARLKILQVIKEDAHLLYGFLEESEKILFERLLKINGVGGRIALAILSSFSPNEFENIIATKEVKRLQQVPGIGKKLADKIMVDLIGFFIQDENRPARNEVFLALESLGFKSAEINPVLKTLKPHLSIEAAIKEALQQLRS.

A domain I region spans residues 1-63; that stretch reads MIVGLIGVVE…EDAHLLYGFL (63 aa). The segment at 64–139 is domain II; that stretch reads EESEKILFER…FFIQDENRPA (76 aa). Residue Ala-139 is a region of interest, flexible linker. The tract at residues 139–183 is domain III; that stretch reads ARNEVFLALESLGFKSAEINPVLKTLKPHLSIEAAIKEALQQLRS.

This sequence belongs to the RuvA family. Homotetramer. Forms an RuvA(8)-RuvB(12)-Holliday junction (HJ) complex. HJ DNA is sandwiched between 2 RuvA tetramers; dsDNA enters through RuvA and exits via RuvB. An RuvB hexamer assembles on each DNA strand where it exits the tetramer. Each RuvB hexamer is contacted by two RuvA subunits (via domain III) on 2 adjacent RuvB subunits; this complex drives branch migration. In the full resolvosome a probable DNA-RuvA(4)-RuvB(12)-RuvC(2) complex forms which resolves the HJ.

It localises to the cytoplasm. Its function is as follows. The RuvA-RuvB-RuvC complex processes Holliday junction (HJ) DNA during genetic recombination and DNA repair, while the RuvA-RuvB complex plays an important role in the rescue of blocked DNA replication forks via replication fork reversal (RFR). RuvA specifically binds to HJ cruciform DNA, conferring on it an open structure. The RuvB hexamer acts as an ATP-dependent pump, pulling dsDNA into and through the RuvAB complex. HJ branch migration allows RuvC to scan DNA until it finds its consensus sequence, where it cleaves and resolves the cruciform DNA. This is Holliday junction branch migration complex subunit RuvA from Helicobacter pylori (strain J99 / ATCC 700824) (Campylobacter pylori J99).